The following is a 305-amino-acid chain: Nod factor export ATP-binding protein I (305 aa).

Residues 8–237 form the ABC transporter domain; that stretch reads IDLVGVRKSF…HIGCNVIEIY (230 aa). ATP is bound at residue 40–47; it reads GPNGAGKS.

The protein belongs to the ABC transporter superfamily. Lipooligosaccharide exporter (TC 3.A.1.102) family. The complex is composed of two ATP-binding proteins (NodI) and two transmembrane proteins (NodJ).

The protein resides in the cell inner membrane. Its function is as follows. Part of the ABC transporter complex NodIJ involved in the export of the nodulation factors (Nod factors), the bacterial signal molecules that induce symbiosis and subsequent nodulation induction. Nod factors are LCO (lipo-chitin oligosaccharide), a modified beta-1,4-linked N-acetylglucosamine oligosaccharide. This subunit is responsible for energy coupling to the transport system. The polypeptide is Nod factor export ATP-binding protein I (Bradyrhizobium sp. (strain SNU001)).